The chain runs to 463 residues: MLTILKTGQSAHKVPPEKVQATYGRYRIQALLSVFLGYLAYYIVRNNFTLSTPYLKEQLDLSATQIGLLSSCMLIAYGISKGVMSSLADKASPKVFMACGLVLCAIVNVGLGFSSAFWIFAALVVFNGLFQGMGVGPSFITIANWFPRRERGRVGAFWNISHNVGGGIVAPIVGAAFAILGSEHWQSASYIVPACVAVIFALIVLVLGKGSPRKEGLPSLEQMMPEEKVVLKTKNTAKAPENMSAWQIFCTYVLRNKNAWYISLVDVFVYMVRFGMISWLPIYLLTVKHFSKEQMSVAFLFFEWAAIPSTLLAGWLSDKLFKGRRMPLAMICMALIFVCLIGYWKSESLLMVTIFAAIVGCLIYVPQFLASVQTMEIVPSFAVGSAVGLRGFMSYIFGASLGTSLFGVMVDKLGWYGGFYLLMGGIVCCILFCYLSHRGALELERQRQNALHNQDSLQLADAQ.

Residues 1 to 29 lie on the Cytoplasmic side of the membrane; sequence MLTILKTGQSAHKVPPEKVQATYGRYRIQ. Helical transmembrane passes span 30 to 50, 59 to 79, 106 to 126, 127 to 147, 160 to 180, 188 to 208, 267 to 287, 297 to 317, 326 to 346, 349 to 369, 391 to 411, and 413 to 433; these read ALLS…NFTL, LDLS…AYGI, IVNV…LVVF, NGLF…NWFP, ISHN…FAIL, ASYI…LVLG, VFVY…LLTV, VAFL…GWLS, MPLA…YWKS, LLMV…PQFL, GFMS…VMVD, and LGWY…ILFC.

It belongs to the major facilitator superfamily. Organophosphate:Pi antiporter (OPA) (TC 2.A.1.4) family.

The protein localises to the cell inner membrane. The phosphoglycerate transporter protein is a part of the PGT transport system. It is the membrane bound transporter for phosphoglycerate into salmonella. This chain is Phosphoglycerate transporter protein (pgtP), found in Salmonella typhimurium (strain LT2 / SGSC1412 / ATCC 700720).